We begin with the raw amino-acid sequence, 203 residues long: Synaptosomal-associated protein 25-B (203 aa).

The span at 1–11 shows a compositional bias: basic and acidic residues; that stretch reads MADEADMRNEL. Positions 1–25 are disordered; sequence MADEADMRNELTDMQARADQLGDES. T-SNARE coiled-coil homology domains are found at residues 19–81 and 137–199; these read DQLG…LTDL and DARE…ATKM.

This sequence belongs to the SNAP-25 family.

It localises to the synapse. It is found in the synaptosome. The protein localises to the cell membrane. Functionally, may play an important role in the synaptic function of specific neuronal systems. Associates with proteins involved in vesicle docking and membrane fusion. This Carassius auratus (Goldfish) protein is Synaptosomal-associated protein 25-B (snap25b).